Here is a 130-residue protein sequence, read N- to C-terminus: Early E3B 14.5 kDa protein (130 aa).

Positions 1-19 are cleaved as a signal peptide; sequence MKRIVTFVLLIFCALPVLC. The helical transmembrane segment at 53-77 threads the bilayer; the sequence is AWLYAIISVMVFCSTIFALAIYPYL.

This sequence belongs to the adenoviridae E3_14 family. In terms of processing, phosphorylated on serine; O-glycosylated, but not N-glycosylated.

It localises to the host membrane. In terms of biological role, down-regulates the EGF receptor and prevents cytolysis by TNF. The protein is Early E3B 14.5 kDa protein of Human adenovirus C serotype 6 (HAdV-6).